A 386-amino-acid polypeptide reads, in one-letter code: 17-hydroxy-3-oxo-4-pregnene-20-carboxyl-CoA lyase (386 aa).

Catalysis depends on Y292, which acts as the Proton acceptor. The active-site Proton donor is the Y342.

Belongs to the thiolase-like superfamily. As to quaternary structure, homodimer. Interacts with the ChsH1/ChsH2 hydratase via the DUF35 C-terminal region of ChsH2 (ChsH2-DUF35). The ChsH1-ChsH2-Ltp2 protein complex is composed of two protomers that form a heterohexameric structure through the Ltp2 dimerization interface.

It catalyses the reaction 17-hydroxy-3-oxochol-4-en-22-oyl-CoA = androst-4-ene-3,17-dione + propanoyl-CoA. The protein operates within steroid metabolism; cholesterol degradation. Involved in cholesterol side chain degradation. When associated with the ChsH1/ChsH2 hydratase, catalyzes the retroaldol cleavage of 17-hydroxy-3-oxo-4-pregnene-20-carboxyl-CoA (17-HOPC-CoA) produced by the hydratase, forming androst-4-ene-3,17-dione and propionyl-CoA. This chain is 17-hydroxy-3-oxo-4-pregnene-20-carboxyl-CoA lyase, found in Mycobacterium tuberculosis (strain ATCC 25618 / H37Rv).